We begin with the raw amino-acid sequence, 764 residues long: Acylamino-acid-releasing enzyme (764 aa).

Catalysis depends on charge relay system residues Ser-618, Asp-707, and His-739.

The protein belongs to the peptidase S9C family. In terms of assembly, homotetramer.

The protein resides in the cytoplasm. The protein localises to the nucleus. It catalyses the reaction Cleavage of an N-acetyl or N-formyl amino acid from the N-terminus of a polypeptide.. With respect to regulation, strongly inhibited by the serine protease inhibitor diisopropyl fluorophosphate. Catalyzes the hydrolysis of the N-terminal peptide bond of an N-acetylated peptide to generate an N-acetylated amino acid and a peptide with a free N-terminus. Can degrade the glycated RuBisCO (ribulose-1,5-bisphosphate carboxylase/oxygenase) protein but not the native protein. May be involved in the elimination of glycated proteins. Plays a homeostatic role in sustaining the cytoplasmic antioxidative system. May contribute to the elimination of the oxidized proteins in the cytoplasm. The sequence is that of Acylamino-acid-releasing enzyme from Arabidopsis thaliana (Mouse-ear cress).